A 496-amino-acid chain; its full sequence is Probable fatty acyl-CoA reductase 5 (496 aa).

Belongs to the fatty acyl-CoA reductase family. Expressed in the endodermal cell layer surrounding the central vasculature in roots. Expressed in floral organs of very young unopened buds and receptacle of siliques.

The enzyme catalyses a long-chain fatty acyl-CoA + 2 NADPH + 2 H(+) = a long-chain primary fatty alcohol + 2 NADP(+) + CoA. Catalyzes the reduction of fatty acyl-CoA to fatty alcohols. Catalyzes specifically the formation of C18:0 fatty alcohol. Provides the fatty alcohols required for synthesis of suberin in roots, seed coat and wound-induced leaf tissue. Provides the fatty alcohols required for synthesis of alkyl hydroxycinnamates in root waxes. In Arabidopsis thaliana (Mouse-ear cress), this protein is Probable fatty acyl-CoA reductase 5.